Consider the following 214-residue polypeptide: Ras-related protein RABA2b (214 aa).

GTP is bound at residue 19 to 26 (GDSGVGKS). The short motif at 41–49 (SKSTIGVEF) is the Effector region element. GTP contacts are provided by residues 67–71 (DTAGQ), 125–128 (NKSD), and 155–156 (SA). 2 S-geranylgeranyl cysteine lipidation sites follow: Cys-211 and Cys-212.

The protein belongs to the small GTPase superfamily. Rab family. Expressed in root tips.

The protein localises to the endosome membrane. It is found in the golgi apparatus. Its subcellular location is the trans-Golgi network membrane. Intracellular vesicle trafficking and protein transport. The polypeptide is Ras-related protein RABA2b (RABA2B) (Arabidopsis thaliana (Mouse-ear cress)).